We begin with the raw amino-acid sequence, 2561 residues long: Plipastatin synthase subunit A (2561 aa).

The domain 1 (glutamate-activating) stretch occupies residues 1–1038 (MSEHTYSLTH…ATVIREGTDS (1038 aa)). The segment at 2-300 (SEHTYSLTHA…SSLPIRITVD (299 aa)) is condensation 1. An adenylation 1 region spans residues 485–888 (TYAELDMYAS…SIEGVREAAV (404 aa)). The Carrier 1 domain occupies 961–1036 (APRNVTEMKL…GLATVIREGT (76 aa)). Serine 996 is modified (O-(pantetheine 4'-phosphoryl)serine). Residues 1048-1338 (KQETYPVSSA…NTLALRTRPE (291 aa)) are condensation 2. The domain 2 (D-ornithine-activating) stretch occupies residues 1048-2554 (KQETYPVSSA…ELTLSALSSI (1507 aa)). The interval 1525 to 1932 (SYRLLNERAN…QTGLVREAAV (408 aa)) is adenylation 2. The Carrier 2 domain maps to 2007–2081 (APVNDLQKTM…ELCGHITPLA (75 aa)). The residue at position 2042 (serine 2042) is an O-(pantetheine 4'-phosphoryl)serine. Residues 2089 to 2554 (AEGEAELTPI…ELTLSALSSI (466 aa)) are epimerization.

It belongs to the ATP-dependent AMP-binding enzyme family. Requires pantetheine 4'-phosphate as cofactor.

This protein is a multifunctional enzyme, able to activate and polymerize the amino acids Glu and Orn as part of the biosynthesis of the lipopeptide antibiotic lipastatin. The Orn residue is further epimerized to the D-isomer form. The activation sites for these amino acids consist of individual domains. This chain is Plipastatin synthase subunit A (ppsA), found in Bacillus subtilis (strain 168).